A 316-amino-acid polypeptide reads, in one-letter code: Pantothenate kinase (316 aa).

Residue 95–102 participates in ATP binding; that stretch reads GSVAVGKS.

Belongs to the prokaryotic pantothenate kinase family.

The protein resides in the cytoplasm. The catalysed reaction is (R)-pantothenate + ATP = (R)-4'-phosphopantothenate + ADP + H(+). It functions in the pathway cofactor biosynthesis; coenzyme A biosynthesis; CoA from (R)-pantothenate: step 1/5. This is Pantothenate kinase from Serratia proteamaculans (strain 568).